An 885-amino-acid chain; its full sequence is Alanine--tRNA ligase (885 aa).

Zn(2+) is bound by residues His574, His578, Cys685, and His689.

It belongs to the class-II aminoacyl-tRNA synthetase family. Zn(2+) is required as a cofactor.

The protein localises to the cytoplasm. The catalysed reaction is tRNA(Ala) + L-alanine + ATP = L-alanyl-tRNA(Ala) + AMP + diphosphate. Functionally, catalyzes the attachment of alanine to tRNA(Ala) in a two-step reaction: alanine is first activated by ATP to form Ala-AMP and then transferred to the acceptor end of tRNA(Ala). Also edits incorrectly charged Ser-tRNA(Ala) and Gly-tRNA(Ala) via its editing domain. The sequence is that of Alanine--tRNA ligase from Deinococcus geothermalis (strain DSM 11300 / CIP 105573 / AG-3a).